The sequence spans 395 residues: S-adenosylmethionine synthase (395 aa).

His-16 contacts ATP. Asp-18 contacts Mg(2+). Residue Glu-44 participates in K(+) binding. L-methionine contacts are provided by Glu-57 and Gln-100. Residues 100 to 110 are flexible loop; that stretch reads QSPDIAGGVNL. ATP-binding positions include 175–177, 242–243, Asp-251, 257–258, Ala-274, and Lys-278; these read DGK, RF, and RK. Residue Asp-251 coordinates L-methionine. Lys-282 serves as a coordination point for L-methionine.

It belongs to the AdoMet synthase family. As to quaternary structure, homotetramer; dimer of dimers. It depends on Mg(2+) as a cofactor. K(+) is required as a cofactor.

It localises to the cytoplasm. It carries out the reaction L-methionine + ATP + H2O = S-adenosyl-L-methionine + phosphate + diphosphate. It participates in amino-acid biosynthesis; S-adenosyl-L-methionine biosynthesis; S-adenosyl-L-methionine from L-methionine: step 1/1. In terms of biological role, catalyzes the formation of S-adenosylmethionine (AdoMet) from methionine and ATP. The overall synthetic reaction is composed of two sequential steps, AdoMet formation and the subsequent tripolyphosphate hydrolysis which occurs prior to release of AdoMet from the enzyme. In Thermus thermophilus (strain ATCC BAA-163 / DSM 7039 / HB27), this protein is S-adenosylmethionine synthase.